The primary structure comprises 303 residues: Probable 5-dehydro-4-deoxyglucarate dehydratase (303 aa).

It belongs to the DapA family.

It carries out the reaction 5-dehydro-4-deoxy-D-glucarate + H(+) = 2,5-dioxopentanoate + CO2 + H2O. Its pathway is carbohydrate acid metabolism; D-glucarate degradation; 2,5-dioxopentanoate from D-glucarate: step 2/2. The protein is Probable 5-dehydro-4-deoxyglucarate dehydratase of Variovorax paradoxus (strain S110).